The chain runs to 150 residues: MARSHDTKGSGGLSQRQLRVGEQVRHALAQVLQRGEIRDDLIERTVISVSEVRMSPDLKIATCFITPLGSADPQAVIKALASHAKFIRGRVAPSLAQMKYMPEFRFRPDTSFDNFSKIDALLRSPEVARDLSHDDDEDGGADEAPRNGDE.

The disordered stretch occupies residues 126–150; the sequence is EVARDLSHDDDEDGGADEAPRNGDE.

Belongs to the RbfA family. In terms of assembly, monomer. Binds 30S ribosomal subunits, but not 50S ribosomal subunits or 70S ribosomes.

It localises to the cytoplasm. Functionally, one of several proteins that assist in the late maturation steps of the functional core of the 30S ribosomal subunit. Associates with free 30S ribosomal subunits (but not with 30S subunits that are part of 70S ribosomes or polysomes). Required for efficient processing of 16S rRNA. May interact with the 5'-terminal helix region of 16S rRNA. The chain is Ribosome-binding factor A from Brucella abortus (strain S19).